Here is a 152-residue protein sequence, read N- to C-terminus: Ribosome maturation factor RimP (152 aa).

It belongs to the RimP family.

It localises to the cytoplasm. Required for maturation of 30S ribosomal subunits. This Francisella tularensis subsp. tularensis (strain FSC 198) protein is Ribosome maturation factor RimP.